The following is a 245-amino-acid chain: 1-(5-phosphoribosyl)-5-[(5-phosphoribosylamino)methylideneamino] imidazole-4-carboxamide isomerase (245 aa).

The active-site Proton acceptor is the Asp7. Catalysis depends on Asp129, which acts as the Proton donor.

It belongs to the HisA/HisF family.

The protein localises to the cytoplasm. It carries out the reaction 1-(5-phospho-beta-D-ribosyl)-5-[(5-phospho-beta-D-ribosylamino)methylideneamino]imidazole-4-carboxamide = 5-[(5-phospho-1-deoxy-D-ribulos-1-ylimino)methylamino]-1-(5-phospho-beta-D-ribosyl)imidazole-4-carboxamide. It functions in the pathway amino-acid biosynthesis; L-histidine biosynthesis; L-histidine from 5-phospho-alpha-D-ribose 1-diphosphate: step 4/9. This Aliivibrio fischeri (strain ATCC 700601 / ES114) (Vibrio fischeri) protein is 1-(5-phosphoribosyl)-5-[(5-phosphoribosylamino)methylideneamino] imidazole-4-carboxamide isomerase.